A 102-amino-acid polypeptide reads, in one-letter code: Glutaredoxin-C13 (102 aa).

The region spanning 1-101 (MDKVMRMSSE…PLIKPYQSIL (101 aa)) is the Glutaredoxin domain. Cysteines 21 and 24 form a disulfide.

The protein belongs to the glutaredoxin family. CC-type subfamily.

It is found in the cytoplasm. Has a glutathione-disulfide oxidoreductase activity in the presence of NADPH and glutathione reductase. Reduces low molecular weight disulfides and proteins. In Arabidopsis thaliana (Mouse-ear cress), this protein is Glutaredoxin-C13 (GRXC13).